A 739-amino-acid chain; its full sequence is Phosphoribosylformylglycinamidine synthase subunit PurL (739 aa).

H52 is an active-site residue. ATP contacts are provided by Y55 and K94. E96 provides a ligand contact to Mg(2+). Residues 97 to 100 (SHNH) and R119 each bind substrate. The active-site Proton acceptor is H98. Residue D120 coordinates Mg(2+). Q243 lines the substrate pocket. Residue D273 participates in Mg(2+) binding. Position 317–319 (317–319 (ESQ)) interacts with substrate. The ATP site is built by D500 and G537. A Mg(2+)-binding site is contributed by N538. S540 is a substrate binding site.

The protein belongs to the FGAMS family. In terms of assembly, monomer. Part of the FGAM synthase complex composed of 1 PurL, 1 PurQ and 2 PurS subunits.

The protein localises to the cytoplasm. It carries out the reaction N(2)-formyl-N(1)-(5-phospho-beta-D-ribosyl)glycinamide + L-glutamine + ATP + H2O = 2-formamido-N(1)-(5-O-phospho-beta-D-ribosyl)acetamidine + L-glutamate + ADP + phosphate + H(+). It participates in purine metabolism; IMP biosynthesis via de novo pathway; 5-amino-1-(5-phospho-D-ribosyl)imidazole from N(2)-formyl-N(1)-(5-phospho-D-ribosyl)glycinamide: step 1/2. Its function is as follows. Part of the phosphoribosylformylglycinamidine synthase complex involved in the purines biosynthetic pathway. Catalyzes the ATP-dependent conversion of formylglycinamide ribonucleotide (FGAR) and glutamine to yield formylglycinamidine ribonucleotide (FGAM) and glutamate. The FGAM synthase complex is composed of three subunits. PurQ produces an ammonia molecule by converting glutamine to glutamate. PurL transfers the ammonia molecule to FGAR to form FGAM in an ATP-dependent manner. PurS interacts with PurQ and PurL and is thought to assist in the transfer of the ammonia molecule from PurQ to PurL. This Enterococcus faecalis (strain ATCC 700802 / V583) protein is Phosphoribosylformylglycinamidine synthase subunit PurL.